The following is a 151-amino-acid chain: Large ribosomal subunit protein bL9 (151 aa).

Belongs to the bacterial ribosomal protein bL9 family.

In terms of biological role, binds to the 23S rRNA. The chain is Large ribosomal subunit protein bL9 from Desulfotalea psychrophila (strain LSv54 / DSM 12343).